A 212-amino-acid polypeptide reads, in one-letter code: Protein Rv0786c (212 aa).

In Mycobacterium tuberculosis (strain ATCC 25618 / H37Rv), this protein is Protein Rv0786c.